We begin with the raw amino-acid sequence, 149 residues long: Transcriptional repressor NrdR (149 aa).

A zinc finger lies at 3–34; it reads CPFCFAVDTKVIDSRLVGEGSSVRRRRQCLVC. The 91-residue stretch at 49-139 folds into the ATP-cone domain; that stretch reads PRVVKSNDVR…VYRSFEDIKE (91 aa).

It belongs to the NrdR family. Zn(2+) serves as cofactor.

In terms of biological role, negatively regulates transcription of bacterial ribonucleotide reductase nrd genes and operons by binding to NrdR-boxes. The protein is Transcriptional repressor NrdR of Klebsiella pneumoniae (strain 342).